A 244-amino-acid chain; its full sequence is Probable transcriptional regulatory protein CBU_1566 (244 aa).

Belongs to the TACO1 family.

The protein resides in the cytoplasm. The chain is Probable transcriptional regulatory protein CBU_1566 from Coxiella burnetii (strain RSA 493 / Nine Mile phase I).